A 362-amino-acid chain; its full sequence is Homoserine O-acetyltransferase FUB5 (362 aa).

Residues 12-335 form the AB hydrolase-1 domain; the sequence is NVMIICHALS…VSDDGHDAFL (324 aa). The active-site Nucleophile is Ser110. Positions 195–232 are disordered; sequence RFGRDTGNKKKTQQQDSKTIPNNGTPIHSQGGADETPV. The span at 208–222 shows a compositional bias: polar residues; that stretch reads QQDSKTIPNNGTPIH. Active-site residues include Asp302 and His331.

Belongs to the AB hydrolase superfamily. MetX family.

The catalysed reaction is L-homoserine + acetyl-CoA = O-acetyl-L-homoserine + CoA. Its pathway is mycotoxin biosynthesis. Functionally, homoserine O-acetyltransferase; part of the gene cluster that mediates the biosynthesis of fusaric acid, a mycotoxin with low to moderate toxicity to animals and humans, but with high phytotoxic properties. L-aspartate is suggested as fusaric acid amino acid precursor that is activated and further processed to O-acetyl-L-homoserine by cluster enzymes aspartate kinase FUB3 and homoserine O-acetyltransferase FUB5, as well as enzymes of the primary metabolism. The polyketide synthase (PKS) FUB1 generates the triketide trans-2-hexenal which is presumptively released by the hydrolase FUB4 and linked to the NRPS-bound amino acid precursor by NAD(P)-dependent dehydrogenase FUB6. FUB1, FUB4, and the non-canonical NRPS Fub8 may form an enzyme complex. Further processing of the NRPS-bound intermediate might be carried out by FUB6 and the O-acetylhomoserine FUB7, enabling a spontaneous electrocyclization to close the carbon backbone of fusaric acid. Dihydrofusaric acid is likely to be released via reduction by the thioester reductase (TR) domain of FUB8 whereupon the final oxidation to fusaric acid may (also) be performed by the FMN-dependent dehydrogenase FUB9. This is Homoserine O-acetyltransferase FUB5 from Fusarium oxysporum f. sp. lycopersici (strain 4287 / CBS 123668 / FGSC 9935 / NRRL 34936) (Fusarium vascular wilt of tomato).